A 263-amino-acid polypeptide reads, in one-letter code: MASSLHKHLLSAARYHLKETKRMSMMVALNLAAEILAVDCGLKPCFLYDYTTSGVQQICSYLKELQNLGLIVGHLHILNIEETILIINVTKAVSYLETLLHSQDLHLIDVSNYLSQPELVSSNQVPQIHAQLAELLGHIKPYQSGQPASVSVGGIQSPEWNLCTMFGFFLQFPSTYWFDTQKGFENCLSFTPLRLFTVQANCSRIGHQSVQIYSFTVPECVYQATQVHLEDWSKSLKQAFNEQNYFTDLEIITNTVSLPSVAL.

The protein belongs to the UPF0739 family.

The chain is UPF0739 protein C1orf74 homolog from Xenopus tropicalis (Western clawed frog).